A 217-amino-acid polypeptide reads, in one-letter code: Large ribosomal subunit protein uL1 (217 aa).

It belongs to the universal ribosomal protein uL1 family. As to quaternary structure, part of the 50S ribosomal subunit.

Its function is as follows. Binds directly to 23S rRNA. The L1 stalk is quite mobile in the ribosome, and is involved in E site tRNA release. Protein L1 is also a translational repressor protein, it controls the translation of the L11 operon by binding to its mRNA. The protein is Large ribosomal subunit protein uL1 of Wolbachia pipientis wMel.